Reading from the N-terminus, the 509-residue chain is Light-independent protochlorophyllide reductase subunit B (509 aa).

D36 lines the [4Fe-4S] cluster pocket. D295 functions as the Proton donor in the catalytic mechanism. 430 to 431 (GM) serves as a coordination point for substrate.

This sequence belongs to the ChlB/BchB/BchZ family. Protochlorophyllide reductase is composed of three subunits; ChlL, ChlN and ChlB. Forms a heterotetramer of two ChlB and two ChlN subunits. It depends on [4Fe-4S] cluster as a cofactor.

It is found in the plastid. The protein resides in the chloroplast. The catalysed reaction is chlorophyllide a + oxidized 2[4Fe-4S]-[ferredoxin] + 2 ADP + 2 phosphate = protochlorophyllide a + reduced 2[4Fe-4S]-[ferredoxin] + 2 ATP + 2 H2O. The protein operates within porphyrin-containing compound metabolism; chlorophyll biosynthesis (light-independent). Component of the dark-operative protochlorophyllide reductase (DPOR) that uses Mg-ATP and reduced ferredoxin to reduce ring D of protochlorophyllide (Pchlide) to form chlorophyllide a (Chlide). This reaction is light-independent. The NB-protein (ChlN-ChlB) is the catalytic component of the complex. This Mesostigma viride (Green alga) protein is Light-independent protochlorophyllide reductase subunit B.